Here is a 151-residue protein sequence, read N- to C-terminus: Small ribosomal subunit protein uS15 (151 aa).

It belongs to the universal ribosomal protein uS15 family.

In Pisum sativum (Garden pea), this protein is Small ribosomal subunit protein uS15 (RPS13).